The sequence spans 94 residues: ESAT-6-like protein EsxL (94 aa).

It belongs to the WXG100 family. ESAT-6 subfamily. Strongly interacts with EsxK to form a heterodimeric complex under reducing conditions.

The protein localises to the secreted. This Mycobacterium bovis (strain ATCC BAA-935 / AF2122/97) protein is ESAT-6-like protein EsxL.